The following is a 437-amino-acid chain: Phosphomethylpyrimidine synthase (437 aa).

Substrate contacts are provided by residues Asn-69, Met-98, Tyr-127, His-163, 185 to 187 (SRG), 226 to 229 (DACR), and Glu-265. His-269 is a binding site for Zn(2+). Tyr-292 contributes to the substrate binding site. His-333 is a Zn(2+) binding site. The [4Fe-4S] cluster site is built by Cys-409, Cys-412, and Cys-416.

Belongs to the ThiC family. It depends on [4Fe-4S] cluster as a cofactor.

The catalysed reaction is 5-amino-1-(5-phospho-beta-D-ribosyl)imidazole + S-adenosyl-L-methionine = 4-amino-2-methyl-5-(phosphooxymethyl)pyrimidine + CO + 5'-deoxyadenosine + formate + L-methionine + 3 H(+). Its pathway is cofactor biosynthesis; thiamine diphosphate biosynthesis. Functionally, catalyzes the synthesis of the hydroxymethylpyrimidine phosphate (HMP-P) moiety of thiamine from aminoimidazole ribotide (AIR) in a radical S-adenosyl-L-methionine (SAM)-dependent reaction. This Clostridium kluyveri (strain NBRC 12016) protein is Phosphomethylpyrimidine synthase.